The following is an 83-amino-acid chain: RNA-binding protein Hfq (83 aa).

One can recognise a Sm domain in the interval 9-68 (DPYLNALRKERIPVSIFLVNGIKLQGQIESFDQFVILLKNTVSQMVYKHAISTVVPARNV).

The protein belongs to the Hfq family. As to quaternary structure, homohexamer.

RNA chaperone that binds small regulatory RNA (sRNAs) and mRNAs to facilitate mRNA translational regulation in response to envelope stress, environmental stress and changes in metabolite concentrations. Also binds with high specificity to tRNAs. This Marinobacter nauticus (strain ATCC 700491 / DSM 11845 / VT8) (Marinobacter aquaeolei) protein is RNA-binding protein Hfq.